The chain runs to 225 residues: Translation initiation factor 6 (225 aa).

It belongs to the eIF-6 family.

In terms of biological role, binds to the 50S ribosomal subunit and prevents its association with the 30S ribosomal subunit to form the 70S initiation complex. This Hyperthermus butylicus (strain DSM 5456 / JCM 9403 / PLM1-5) protein is Translation initiation factor 6.